We begin with the raw amino-acid sequence, 315 residues long: L-lactate dehydrogenase (315 aa).

Residues valine 17, aspartate 38, lysine 43, tyrosine 69, and 83–84 each bind NAD(+); that span reads GA. Substrate contacts are provided by residues glutamine 86, arginine 92, and 124-127; that span reads NPVD. NAD(+)-binding positions include 122–124 and serine 147; that span reads ATN. A substrate-binding site is contributed by 152-155; sequence DTAR. Positions 157 and 172 each coordinate beta-D-fructose 1,6-bisphosphate. Histidine 179 functions as the Proton acceptor in the catalytic mechanism. Phosphotyrosine is present on tyrosine 224. Threonine 233 is a substrate binding site.

It belongs to the LDH/MDH superfamily. LDH family. In terms of assembly, homotetramer.

The protein localises to the cytoplasm. The enzyme catalyses (S)-lactate + NAD(+) = pyruvate + NADH + H(+). It participates in fermentation; pyruvate fermentation to lactate; (S)-lactate from pyruvate: step 1/1. Allosterically activated by fructose 1,6-bisphosphate (FBP). Its function is as follows. Catalyzes the conversion of lactate to pyruvate. The sequence is that of L-lactate dehydrogenase from Bacillus pumilus (strain SAFR-032).